Consider the following 159-residue polypeptide: H/ACA ribonucleoprotein complex subunit 2-like protein (159 aa).

The interval 1 to 28 (MAKTPKKDKTEEKEEHEESGGNKEDRER) is disordered.

This sequence belongs to the eukaryotic ribosomal protein eL8 family. Component of the small nucleolar ribonucleoprotein particle containing H/ACA-type snoRNAs (H/ACA snoRNPs). Component of the telomerase holoenzyme complex.

The protein resides in the nucleus. Its subcellular location is the nucleolus. Functionally, required for ribosome biogenesis. Part of a complex which catalyzes pseudouridylation of rRNA. This involves the isomerization of uridine such that the ribose is subsequently attached to C5, instead of the normal N1. Pseudouridine ('psi') residues may serve to stabilize the conformation of rRNAs. This chain is H/ACA ribonucleoprotein complex subunit 2-like protein, found in Branchiostoma belcheri (Amphioxus).